A 448-amino-acid chain; its full sequence is MSEKTKEKVSLVSLGCPKNLVDAEVMLGYLSQDEYEVTTDETQADIIVVNTCSFIKEAKQESIDTILDLADRKHDARCKLLIVTGCLPQRYQQELAKELPEVDIFIGTGDYPRIAEIIAEKKQTEEQLCYTGDPNFVYNDEVPRLQSSPHYTAYLKIAEGCSNNCSYCVIPSLRGGHRSRPLATLLAEAKALVEGGVKELNLIAQDITAYGRDLEGKPSLELLIKELVKMEKLKWIRLLYAYPDGVTDSLIQLIKEEPKVCKYLDLPIQHISDPVLSNMKRRSGEAEIRTLISKLRREIPDIAIRTSLIVGFPGETTDDFKKLLQFVEQTRFDRLGVFCYSREDGTPAAEMPDQVSERIKRERHKKLMRTQARVSFKHNRTLVDSEEDVLVEGYSEETELLLKGRSSRQAPDVDGLVYITAGNANVGDIVRLKITDSSDYDLIGEIVD.

The MTTase N-terminal domain occupies 7 to 123 (EKVSLVSLGC…IAEIIAEKKQ (117 aa)). Positions 16, 52, 86, 161, 165, and 168 each coordinate [4Fe-4S] cluster. Residues 147–377 (SSPHYTAYLK…MRTQARVSFK (231 aa)) enclose the Radical SAM core domain. The TRAM domain occupies 380–448 (RTLVDSEEDV…DYDLIGEIVD (69 aa)).

The protein belongs to the methylthiotransferase family. RimO subfamily. [4Fe-4S] cluster serves as cofactor.

Its subcellular location is the cytoplasm. It catalyses the reaction L-aspartate(89)-[ribosomal protein uS12]-hydrogen + (sulfur carrier)-SH + AH2 + 2 S-adenosyl-L-methionine = 3-methylsulfanyl-L-aspartate(89)-[ribosomal protein uS12]-hydrogen + (sulfur carrier)-H + 5'-deoxyadenosine + L-methionine + A + S-adenosyl-L-homocysteine + 2 H(+). Catalyzes the methylthiolation of an aspartic acid residue of ribosomal protein uS12. The sequence is that of Ribosomal protein uS12 methylthiotransferase RimO from Citrifermentans bemidjiense (strain ATCC BAA-1014 / DSM 16622 / JCM 12645 / Bem) (Geobacter bemidjiensis).